The primary structure comprises 811 residues: Lon protease 1 (811 aa).

The Lon N-terminal domain maps to leucine 15–isoleucine 212. An ATP-binding site is contributed by glycine 376–threonine 383. Residues tyrosine 613 to leucine 794 enclose the Lon proteolytic domain. Catalysis depends on residues serine 700 and lysine 743.

Belongs to the peptidase S16 family. Homohexamer. Organized in a ring with a central cavity.

It localises to the cytoplasm. The enzyme catalyses Hydrolysis of proteins in presence of ATP.. Its function is as follows. ATP-dependent serine protease that mediates the selective degradation of mutant and abnormal proteins as well as certain short-lived regulatory proteins. Required for cellular homeostasis and for survival from DNA damage and developmental changes induced by stress. Degrades polypeptides processively to yield small peptide fragments that are 5 to 10 amino acids long. Binds to DNA in a double-stranded, site-specific manner. The protein is Lon protease 1 of Sorangium cellulosum (strain So ce56) (Polyangium cellulosum (strain So ce56)).